A 1264-amino-acid polypeptide reads, in one-letter code: Valine--tRNA ligase (1264 aa).

Serine 2 carries the N-acetylserine modification. Residues 89–219 (GSRAAVLVQQ…YSGARSVTQQ (131 aa)) enclose the GST C-terminal domain. Residues 218 to 230 (QQPGSEITAPQKT) show a composition bias toward polar residues. The disordered stretch occupies residues 218-296 (QQPGSEITAP…GEKKDVSGTM (79 aa)). Basic and acidic residues-rich tracts occupy residues 234 to 248 (LKKE…EKFQ) and 260 to 275 (HGEK…KRDP). The 'HIGH' region signature appears at 344–354 (PNVTGSLHLGH). 2 positions are modified to phosphoserine: serine 437 and serine 527. Lysine 645 is subject to N6-acetyllysine. The short motif at 862–866 (KMSKS) is the 'KMSKS' region element. Lysine 865 is an ATP binding site.

It belongs to the class-I aminoacyl-tRNA synthetase family. Forms high-molecular-mass aggregates with elongation factor 1.

It catalyses the reaction tRNA(Val) + L-valine + ATP = L-valyl-tRNA(Val) + AMP + diphosphate. Can be regulated by protein kinase C-dependent phosphorylation. In Rattus norvegicus (Rat), this protein is Valine--tRNA ligase (Vars1).